The primary structure comprises 415 residues: DNA double-strand break repair protein Mre11 (415 aa).

Positions 10, 12, 51, and 86 each coordinate Mn(2+). His87 serves as the catalytic Proton donor. Mn(2+) is bound by residues His174, His208, and His210.

It belongs to the MRE11/RAD32 family. Homodimer. Forms a heterotetramer composed of two Mre11 subunits and two Rad50 subunits. The cofactor is Mn(2+).

Nuclease activity is regulated by Rad50. Part of the Rad50/Mre11 complex, which is involved in the early steps of DNA double-strand break (DSB) repair. The complex may facilitate opening of the processed DNA ends to aid in the recruitment of HerA and NurA. Mre11 binds to DSB ends and has both double-stranded 3'-5' exonuclease activity and single-stranded endonuclease activity. In Pyrococcus abyssi (strain GE5 / Orsay), this protein is DNA double-strand break repair protein Mre11.